The primary structure comprises 149 residues: Snake venom vascular endothelial growth factor toxin 2 (149 aa).

An N-terminal signal peptide occupies residues 1-24 (MAAYLLAVAILFCIQGWPSGTVQG). At Q25 the chain carries Pyrrolidone carboxylic acid. Disulfide bonds link C38/C80, C69/C115, and C73/C117. The tract at residues 118–149 (RPRSGRVNSGKRKRNPEEGGAESQVPLGLTSF) is disordered.

It belongs to the PDGF/VEGF growth factor family. Snake venom VEGF subfamily. As to quaternary structure, homodimer; disulfide-linked. Interacts with VEGF receptor-1 (FLT1) with a high affinity, whereas it binds to VEGF receptor-2 (KDR) with a low affinity. Does not bind VEGF receptor-3 (FLT4). As to expression, expressed by the venom gland.

It is found in the secreted. Its function is as follows. Snake venom VEGFs that may contribute to venom dispersion and prey subjugation by inducing vascular permeability and hypotension. This protein induces an increase in capillary permeability after intradermal injection, as well as a drastic hypotensive effect after intravenous injection. The hypotension is mediated by nitric oxide (NO), which is produced by VEGF-activated endothelium NO synthase. Also induces angiogenesis in vitro. Like other crotalid VEGFs, this protein interacts with VEGF receptor-1 (FLT1) with a high affinity, whereas it binds to VEGF receptor-2 (KDR) with a low affinity. The chain is Snake venom vascular endothelial growth factor toxin 2 from Sistrurus catenatus edwardsii (Desert massasauga).